Reading from the N-terminus, the 206-residue chain is Protein-methionine-sulfoxide reductase heme-binding subunit MsrQ (206 aa).

Transmembrane regions (helical) follow at residues 7–27 (IIIH…LLSG), 43–63 (FLGF…KVFY), 77–97 (LGLW…ALEL), 112–132 (GYLI…LSSW), 142–162 (WWFY…IHYV), and 172–192 (SMLY…GLFI).

It belongs to the MsrQ family. As to quaternary structure, heterodimer of a catalytic subunit (MsrP) and a heme-binding subunit (MsrQ). It depends on FMN as a cofactor. Heme b serves as cofactor.

It is found in the cell inner membrane. In terms of biological role, part of the MsrPQ system that repairs oxidized periplasmic proteins containing methionine sulfoxide residues (Met-O), using respiratory chain electrons. Thus protects these proteins from oxidative-stress damage caused by reactive species of oxygen and chlorine generated by the host defense mechanisms. MsrPQ is essential for the maintenance of envelope integrity under bleach stress, rescuing a wide series of structurally unrelated periplasmic proteins from methionine oxidation. MsrQ provides electrons for reduction to the reductase catalytic subunit MsrP, using the quinone pool of the respiratory chain. This chain is Protein-methionine-sulfoxide reductase heme-binding subunit MsrQ, found in Pasteurella multocida (strain Pm70).